A 150-amino-acid polypeptide reads, in one-letter code: Large ribosomal subunit protein bL9 (150 aa).

It belongs to the bacterial ribosomal protein bL9 family.

In terms of biological role, binds to the 23S rRNA. The chain is Large ribosomal subunit protein bL9 from Streptococcus mutans serotype c (strain ATCC 700610 / UA159).